The primary structure comprises 646 residues: Threonine--tRNA ligase (646 aa).

In terms of domain architecture, TGS spans 1–63 (MADLSIIFPD…SSGGSIEIIT (63 aa)). The interval 244–541 (DHRKLGKELG…LIEEYKGAFP (298 aa)) is catalytic. Zn(2+)-binding residues include C337, H388, and H518.

Belongs to the class-II aminoacyl-tRNA synthetase family. As to quaternary structure, homodimer. Zn(2+) is required as a cofactor.

Its subcellular location is the cytoplasm. The catalysed reaction is tRNA(Thr) + L-threonine + ATP = L-threonyl-tRNA(Thr) + AMP + diphosphate + H(+). In terms of biological role, catalyzes the attachment of threonine to tRNA(Thr) in a two-step reaction: L-threonine is first activated by ATP to form Thr-AMP and then transferred to the acceptor end of tRNA(Thr). Also edits incorrectly charged L-seryl-tRNA(Thr). The sequence is that of Threonine--tRNA ligase from Oceanobacillus iheyensis (strain DSM 14371 / CIP 107618 / JCM 11309 / KCTC 3954 / HTE831).